A 235-amino-acid polypeptide reads, in one-letter code: Sperm annulus positionning complex subunit Chibby3 (235 aa).

Positions 1–41 (MADSKMKWGQAWDSSLGTATTSSSSATGSPSPFQNIRVPDT) are disordered. Residues 14–32 (SSLGTATTSSSSATGSPSP) are compositionally biased toward low complexity. Positions 167-181 (LLEENNYLKLQQELL) are leucine-zipper; mediates homodimerization.

The protein belongs to the chibby family. Homodimer. Interacts with CIBAR1 (via BAR-like domain); both proteins form a ninefold symmetric structure at the flagellar base; are recruited to the annulus in a mutually dependent manner and regulate annulus positionning. In terms of tissue distribution, testis-specific.

It localises to the cell projection. The protein resides in the cilium. It is found in the flagellum. Plays a key role in the correct positioning of the annulus, a septin-based ring strucure in the sperm flagellum, serving both as a physical barrier and a membrane diffusion barrier that separates the midpiece (MP) from the principal piece (PP). This positioning is essential for proper sperm motility and function. Interacts with CIBAR1 to form a complex which localizes to the curved membrane region of the flagellar pocket. By doing so, may provide stability and rigidity to the periannular membrane to prevent membrane deformation. This function is crucial for halting annulus migration at the proximal end of the fibrous sheath-containing PP. This is Sperm annulus positionning complex subunit Chibby3 (Cby3) from Mus musculus (Mouse).